Reading from the N-terminus, the 120-residue chain is Large ribosomal subunit protein bL17 (120 aa).

Belongs to the bacterial ribosomal protein bL17 family. In terms of assembly, part of the 50S ribosomal subunit. Contacts protein L32.

This is Large ribosomal subunit protein bL17 from Bacillus subtilis (strain 168).